Consider the following 433-residue polypeptide: Tol-Pal system protein TolB (433 aa).

A signal peptide spans 1–21 (MINLFRGLLVVLCFASAMVAA).

The protein belongs to the TolB family. In terms of assembly, the Tol-Pal system is composed of five core proteins: the inner membrane proteins TolA, TolQ and TolR, the periplasmic protein TolB and the outer membrane protein Pal. They form a network linking the inner and outer membranes and the peptidoglycan layer.

Its subcellular location is the periplasm. Its function is as follows. Part of the Tol-Pal system, which plays a role in outer membrane invagination during cell division and is important for maintaining outer membrane integrity. This chain is Tol-Pal system protein TolB, found in Pseudomonas syringae pv. tomato (strain ATCC BAA-871 / DC3000).